Here is a 131-residue protein sequence, read N- to C-terminus: Ribonuclease P protein component (131 aa).

It belongs to the RnpA family. As to quaternary structure, consists of a catalytic RNA component (M1 or rnpB) and a protein subunit.

The enzyme catalyses Endonucleolytic cleavage of RNA, removing 5'-extranucleotides from tRNA precursor.. Its function is as follows. RNaseP catalyzes the removal of the 5'-leader sequence from pre-tRNA to produce the mature 5'-terminus. It can also cleave other RNA substrates such as 4.5S RNA. The protein component plays an auxiliary but essential role in vivo by binding to the 5'-leader sequence and broadening the substrate specificity of the ribozyme. In Stutzerimonas stutzeri (strain A1501) (Pseudomonas stutzeri), this protein is Ribonuclease P protein component.